Here is a 375-residue protein sequence, read N- to C-terminus: tRNA-specific 2-thiouridylase MnmA (375 aa).

Residues 16 to 23 (GMSGGVDS) and M42 each bind ATP. The interval 102–104 (NPD) is interaction with target base in tRNA. The Nucleophile role is filled by C107. The cysteines at positions 107 and 203 are disulfide-linked. G131 lines the ATP pocket. Positions 153-155 (KDQ) are interaction with tRNA. C203 acts as the Cysteine persulfide intermediate in catalysis. Residues 315 to 316 (RY) form an interaction with tRNA region.

Belongs to the MnmA/TRMU family.

The protein resides in the cytoplasm. It carries out the reaction S-sulfanyl-L-cysteinyl-[protein] + uridine(34) in tRNA + AH2 + ATP = 2-thiouridine(34) in tRNA + L-cysteinyl-[protein] + A + AMP + diphosphate + H(+). Its function is as follows. Catalyzes the 2-thiolation of uridine at the wobble position (U34) of tRNA, leading to the formation of s(2)U34. This is tRNA-specific 2-thiouridylase MnmA from Pseudomonas paraeruginosa (strain DSM 24068 / PA7) (Pseudomonas aeruginosa (strain PA7)).